An 86-amino-acid chain; its full sequence is MIRFILFISCFFLIGMVIECKDGYLMEPNGCKRGCLTRPARYCPNECSRLKGKDGYCYLWLACYCYNMPESAPVWERATNRCGKGK.

Residues 1-20 form the signal peptide; the sequence is MIRFILFISCFFLIGMVIEC. Positions 21-83 constitute an LCN-type CS-alpha/beta domain; that stretch reads KDGYLMEPNG…VWERATNRCG (63 aa). Intrachain disulfides connect Cys-31–Cys-82, Cys-35–Cys-57, Cys-43–Cys-63, and Cys-47–Cys-65. Lys-84 carries the lysine amide modification.

In terms of tissue distribution, expressed by the venom gland.

The protein localises to the secreted. Functionally, beta toxins bind voltage-independently at site-4 of sodium channels (Nav) and shift the voltage of activation toward more negative potentials thereby affecting sodium channel activation and promoting spontaneous and repetitive firing. The sequence is that of Toxin Td1 from Tityus discrepans (Venezuelan scorpion).